Reading from the N-terminus, the 512-residue chain is MWRVRKRGYFGIWSFPLIIAAVCAQSVNDPSNMSLVKETVDRLLKGYDIRLRPDFGGPPVAVGMNIDIASIDMVSEVNMDYTLTMYFQQAWRDKRLSYNVIPLNLTLDNRVADQLWVPDTYFLNDKKSFVHGVTVKNRMIRLHPDGTVLYGLRITTTAACMMDLRRYPLDEQNCTLEIESYGYTTDDIEFYWRGDDNAVTGVTKIELPQFSIVDYKLITKKVVFSTGSYPRLSLSFKLKRNIGYFILQTYMPSILITILSWVSFWINYDASAARVALGITTVLTMTTINTHLRETLPKIPYVKAIDMYLMGCFVFVFMALLEYALVNYIFFGRGPQRQKKAAEKAASANNEKMRLDVNKIFYKDIKQNGTQYRSLWDPTGNLSPTRRTTNYDFSLYTMDPHENILLSTLEIKNEMATSEAVMGLGDPRSTMLAYDASSIQYRKAGLPRHSFGRNALERHVAQKKSRLRRRASQLKITIPDLTDVNAIDRWSRIFFPVVFSFFNIVYWLYYVN.

The first 25 residues, 1–25 (MWRVRKRGYFGIWSFPLIIAAVCAQ), serve as a signal peptide directing secretion. Residues 26–241 (SVNDPSNMSL…LSLSFKLKRN (216 aa)) lie on the Extracellular side of the membrane. 2 N-linked (GlcNAc...) asparagine glycosylation sites follow: Asn-32 and Asn-104. Tyr-121 contributes to the histamine binding site. A disulfide bond links Cys-160 and Cys-174. Asn-173 carries an N-linked (GlcNAc...) asparagine glycan. Histamine is bound by residues 180 to 181 (SY) and Thr-226. Tyr-181 and Thr-226 together coordinate 4-aminobutanoate. Residues 242-262 (IGYFILQTYMPSILITILSWV) form a helical membrane-spanning segment. Residues 263–272 (SFWINYDASA) are Cytoplasmic-facing. The helical transmembrane segment at 273–292 (ARVALGITTVLTMTTINTHL) threads the bilayer. The Extracellular segment spans residues 293-310 (RETLPKIPYVKAIDMYLM). Residues 311–331 (GCFVFVFMALLEYALVNYIFF) form a helical membrane-spanning segment. Topologically, residues 332–490 (GRGPQRQKKA…LTDVNAIDRW (159 aa)) are cytoplasmic. The residue at position 441 (Tyr-441) is a Phosphotyrosine. Residues 491–511 (SRIFFPVVFSFFNIVYWLYYV) form a helical membrane-spanning segment. Residue Asn-512 is a topological domain, extracellular.

It belongs to the ligand-gated ion channel (TC 1.A.9) family. Gamma-aminobutyric acid receptor (TC 1.A.9.5) subfamily. GABRB2 sub-subfamily. In terms of assembly, heteropentamer, formed by a combination of alpha (GABRA1-6), beta (GABRB1-3), gamma (GABRG1-3), delta (GABRD), epsilon (GABRE), rho (GABRR1-3), pi (GABRP) and theta (GABRQ) chains, each subunit exhibiting distinct physiological and pharmacological properties. Interacts with UBQLN1. May interact with KIF21B. Identified in a complex of 720 kDa composed of LHFPL4, NLGN2, GABRA1, GABRB2, GABRG2 and GABRB3. Isoform 1 and isoform 2 show reduced expression in schizophrenic brain. Isoform 3 shows increased expression in schizophrenic and bipolar disorder brains while isoform 4 shows reduced expression.

It localises to the postsynaptic cell membrane. It is found in the cell membrane. Its subcellular location is the cytoplasmic vesicle membrane. It carries out the reaction chloride(in) = chloride(out). Its activity is regulated as follows. Allosterically activated by benzodiazepines. Allosterically activated by the anesthetic etomidate. Inhibited by the antagonist bicuculline. Potentiated by histamine. Its function is as follows. Beta subunit of the heteropentameric ligand-gated chloride channel gated by gamma-aminobutyric acid (GABA), a major inhibitory neurotransmitter in the brain. GABA-gated chloride channels, also named GABA(A) receptors (GABAAR), consist of five subunits arranged around a central pore and contain GABA active binding site(s) located at the alpha and beta subunit interface(s). When activated by GABA, GABAARs selectively allow the flow of chloride anions across the cell membrane down their electrochemical gradient. Chloride influx into the postsynaptic neuron following GABAAR opening decreases the neuron ability to generate a new action potential, thereby reducing nerve transmission. GABAARs containing alpha-1 and beta-2 or -3 subunits exhibit synaptogenic activity; the gamma-2 subunit being necessary but not sufficient to induce rapid synaptic contacts formation. Extrasynaptic beta-2 receptors contribute to the tonic GABAergic inhibition. Beta-containing GABAARs can simultaneously bind GABA and histamine where histamine binds at the interface of two neighboring beta subunits, which may be involved in the regulation of sleep and wakefulness. The protein is Gamma-aminobutyric acid receptor subunit beta-2 of Homo sapiens (Human).